Here is a 338-residue protein sequence, read N- to C-terminus: Transcription factor AP-4 (338 aa).

Residues Ile-48–Leu-99 enclose the bHLH domain. Positions Glu-100 to Leu-120 are leucine-zipper 1. Residues Gln-118–Asp-141 are disordered. 3 positions are modified to phosphoserine: Ser-123, Ser-124, and Ser-139. Residue Lys-147 forms a Glycyl lysine isopeptide (Lys-Gly) (interchain with G-Cter in SUMO2) linkage. The interval Leu-151 to Leu-179 is leucine-zipper 2. Residues Lys-187, Lys-189, and Lys-285 each participate in a glycyl lysine isopeptide (Lys-Gly) (interchain with G-Cter in SUMO2) cross-link. Residues Gln-283–Arg-294 show a composition bias toward basic and acidic residues. Residues Gln-283–Pro-338 are disordered.

As to quaternary structure, efficient DNA binding requires dimerization with another bHLH protein. Homodimer.

Its subcellular location is the nucleus. Functionally, transcription factor that activates both viral and cellular genes by binding to the symmetrical DNA sequence 5'-CAGCTG-3'. The protein is Transcription factor AP-4 (TFAP4) of Homo sapiens (Human).